The chain runs to 360 residues: 45 kDa calcium-binding protein (360 aa).

Positions 1–29 (MVSKQAFLFSLGSLYLSLLFIFLLMDVYA) are cleaved as a signal peptide. N-linked (GlcNAc...) asparagine glycosylation occurs at Asn33. EF-hand domains follow at residues 96-131 (RNRRKLAAIFAKVDRNEDKQISASEMQRWIMEKTEE), 135-170 (EAVNENKLHFRAVDPDGDGHVSWDEYKIKFLASKGF), 231-266 (MLKFMVKEIIRDLDQDGDKKLTLSEFISLPVGTVEN), 276-311 (WVRDRKKEYEEVIDANHDGIVTMEELEEYMDPMNEY), and 312-347 (NALNEAKQMIAVADENQDHLLSLEEILKYSEYFTGS). Ca(2+) contacts are provided by Asp109, Asn111, Asp113, Gln115, Glu120, Asp148, Asp150, Asp152, His154, Glu159, Asp244, Asp246, Asp248, Lys250, Glu255, Asp289, Asn291, Asp293, Glu300, Asp325, Asn327, Asp329, and Glu336.

It belongs to the CREC family.

Its subcellular location is the golgi apparatus lumen. May regulate calcium-dependent activities in the endoplasmic reticulum lumen or post-ER compartment. This Xenopus laevis (African clawed frog) protein is 45 kDa calcium-binding protein (sdf4).